The primary structure comprises 98 residues: Small ribosomal subunit protein eS24 (98 aa).

Belongs to the eukaryotic ribosomal protein eS24 family. Part of the 30S ribosomal subunit.

The polypeptide is Small ribosomal subunit protein eS24 (Thermococcus kodakarensis (strain ATCC BAA-918 / JCM 12380 / KOD1) (Pyrococcus kodakaraensis (strain KOD1))).